The sequence spans 42 residues: MKNFQIYLSTAPVLAAVWFTVLAGILIELNRFFPDALSFPLT.

Residues 7-27 traverse the membrane as a helical segment; the sequence is YLSTAPVLAAVWFTVLAGILI.

The protein belongs to the PsaJ family.

The protein localises to the plastid. It is found in the chloroplast thylakoid membrane. In terms of biological role, may help in the organization of the PsaE and PsaF subunits. The polypeptide is Photosystem I reaction center subunit IX (Ostreococcus tauri).